We begin with the raw amino-acid sequence, 445 residues long: Potassium/proton antiporter CemA (445 aa).

Transmembrane regions (helical) follow at residues 44 to 64 (MQVS…VNIC), 330 to 350 (ALTC…ILIL), 368 to 388 (LIII…GWKL), and 405 to 425 (FILC…KYWI).

Belongs to the CemA family.

The protein resides in the plastid. The protein localises to the chloroplast inner membrane. The catalysed reaction is K(+)(in) + H(+)(out) = K(+)(out) + H(+)(in). Its function is as follows. Contributes to K(+)/H(+) antiport activity by supporting proton efflux to control proton extrusion and homeostasis in chloroplasts in a light-dependent manner to modulate photosynthesis. Prevents excessive induction of non-photochemical quenching (NPQ) under continuous-light conditions. Indirectly promotes efficient inorganic carbon uptake into chloroplasts. This is Potassium/proton antiporter CemA from Pleurastrum terricola (Filamentous green alga).